Here is a 441-residue protein sequence, read N- to C-terminus: Ribosomal protein uS12 methylthiotransferase RimO (441 aa).

An MTTase N-terminal domain is found at 8–118 (PKIGFVSLGC…VLEHVHHYVP (111 aa)). Residues Cys17, Cys53, Cys82, Cys150, Cys154, and Cys157 each coordinate [4Fe-4S] cluster. The 238-residue stretch at 136-373 (LTPRHYAYLK…MQLQQQISAE (238 aa)) folds into the Radical SAM core domain. Residues 376–441 (QEKVGREILV…DEYDLWGSRV (66 aa)) form the TRAM domain.

This sequence belongs to the methylthiotransferase family. RimO subfamily. It depends on [4Fe-4S] cluster as a cofactor.

It localises to the cytoplasm. The enzyme catalyses L-aspartate(89)-[ribosomal protein uS12]-hydrogen + (sulfur carrier)-SH + AH2 + 2 S-adenosyl-L-methionine = 3-methylsulfanyl-L-aspartate(89)-[ribosomal protein uS12]-hydrogen + (sulfur carrier)-H + 5'-deoxyadenosine + L-methionine + A + S-adenosyl-L-homocysteine + 2 H(+). Its function is as follows. Catalyzes the methylthiolation of an aspartic acid residue of ribosomal protein uS12. This chain is Ribosomal protein uS12 methylthiotransferase RimO, found in Escherichia coli (strain UTI89 / UPEC).